Consider the following 303-residue polypeptide: Methionyl-tRNA formyltransferase (303 aa).

A (6S)-5,6,7,8-tetrahydrofolate-binding site is contributed by 108–111; that stretch reads SDLP.

The protein belongs to the Fmt family.

It carries out the reaction L-methionyl-tRNA(fMet) + (6R)-10-formyltetrahydrofolate = N-formyl-L-methionyl-tRNA(fMet) + (6S)-5,6,7,8-tetrahydrofolate + H(+). Its function is as follows. Attaches a formyl group to the free amino group of methionyl-tRNA(fMet). The formyl group appears to play a dual role in the initiator identity of N-formylmethionyl-tRNA by promoting its recognition by IF2 and preventing the misappropriation of this tRNA by the elongation apparatus. This chain is Methionyl-tRNA formyltransferase, found in Rickettsia canadensis (strain McKiel).